We begin with the raw amino-acid sequence, 948 residues long: MAQQYQPGQRWISDSEAELGLGTILAQDGRLLTVLYPATGDTRQYSLRNAPLTRVRFSPGDQITHFEGWKLTVREVEDIDGLMVYHGLDGQNQPRTLPETQLSNFIQFRLASDRLFAGQIDPLSWFSLRYNTLQHTSKQVQSSLWGLGGCRAQPIAHQLHIAREVADRSAPRVLLADEVGLGKTIEAGLVIHRQLLTGRANRVLILVPENLQHQWLVEMRRRFNLQVALFDAERFIESDASNPFEDAQLALVALEWLVEDEKAQDALFAAGWDLMVVDEAHHLVWHEDKASTEYSLVEQLAQVIPGVLLLTATPEQLGQDSHFARLRLLDPNRFHDLAAFRAESEHYRPVAEAVQELLDEGRLSPKAHATIQGFLGAEGEALLAAVSDGDSQASARLIRELLDRHGTGRVLFRNTRAAIQGFPERELHPYPLPMPEQYRDLPAGEHAELYPEVAFQAQGEVSDDERWWRFDPRVDWLIDTLKMLKRTKVLVICAHAETAMDLEDALRVRSGIPASVFHEGMSILERDRAAAYFADEEFGAQVLICSEIGSEGRNFQFAHHLVMFDLPAHPDLLEQRIGRLDRIGQKHVIQLHIPYLQEGPQERLFQWYHEALNAFLNTCPTGNALQHQFGPRLLPMLEGGDSKAWDALVAEAKGERERLEAELHSGRDRLLELNSGGAGEGQALVEDILEQDDQFALPIYMETLFDAFGIDSEDHSENALILKPSEKMLDASFPLGDDEGVTITYDRGQALSREDMQFLTWEHPMVQGGMDLVLSGSMGNTAVALIKNKALKPGTVLLELLFVSEVVAPRSLQLGRYLPPAALRCLLDANGNDLASRVAFETLNEQLESVPRASANKFVQAQRDVLAKRISGGEAKIMPTHVERVAEAQRRLAAEADEELARLTALKAVNPSVRDSEIDALRKQREDGLAMLEKAALRLEAIRVLVAG.

The region spanning 164–332 (EVADRSAPRV…FARLRLLDPN (169 aa)) is the Helicase ATP-binding domain. 177–184 (DEVGLGKT) is an ATP binding site. A DEAH box motif is present at residues 278-281 (DEAH). A Helicase C-terminal domain is found at 473–627 (RVDWLIDTLK…TCPTGNALQH (155 aa)).

Belongs to the SNF2/RAD54 helicase family. RapA subfamily. As to quaternary structure, interacts with the RNAP. Has a higher affinity for the core RNAP than for the holoenzyme. Its ATPase activity is stimulated by binding to RNAP.

Its function is as follows. Transcription regulator that activates transcription by stimulating RNA polymerase (RNAP) recycling in case of stress conditions such as supercoiled DNA or high salt concentrations. Probably acts by releasing the RNAP, when it is trapped or immobilized on tightly supercoiled DNA. Does not activate transcription on linear DNA. Probably not involved in DNA repair. The chain is RNA polymerase-associated protein RapA from Pseudomonas putida (strain W619).